A 1292-amino-acid chain; its full sequence is MSRRKQAKPRSVKVEEGEASDFSLAWDSSVAAAGGLEGEPECDRKTSRALEDRNSVTSQEERNEDDEDVEDESIYTCDHCQQDFESLADLTDHRAHRCPGDGDDDPQLSWVASSPSSKDVASPTQMIGDGCDLGLGEEEGGTGLPYPCQFCDKSFIRLSYLKRHEQIHSDKLPFKCTFCSRLFKHKRSRDRHIKLHTGDKKYHCHECEAAFSRSDHLKIHLKTHSSSKPFKCSVCKRGFSSTSSLQSHMQAHKKNKEHLAKSEKEAKKDDFMCDYCEDTFSQTEELEKHVLTLHPQLSEKADLQCIHCPEVFVDESTLLAHIHQAHANQKHKCPMCPEQFSSVEGVYCHLDSHRQPDSSNHSVSPDPVLGSVASMSSATPDSSASVERGSTPDSTLKPLRGQKKMRDDGQSWPKVVYSCPYCSKRDFTSLAVLEIHLKTIHADKPQQSHTCQICLDSMPTLYNLNEHVRKLHKSHAYPVMQFGNISAFHCNYCPEMFADINSLQEHIRVSHCGPNANPPDGNNAFFCNQCSMGFLTESSLTEHIQQAHCSVGSTKLESPVVQPTQSFMEVYSCPYCTNSPIFGSILKLTKHIKENHKNIPLAHSKKSKAEQSPVSSDVEVSSPKRQRLSGSANSISNGEYPCNQCDLKFSNFESFQTHLKLHLELLLRKQACPQCKEDFDSQESLLQHLTVHYMTTSTHYVCESCDKQFSSVDDLQKHLLDMHTFVLYHCTLCQEVFDSKVSIQVHLAVKHSNEKKMYRCTACNWDFRKEADLQVHVKHSHLGNPAKAHKCIFCGETFSTEVELQCHITTHSKKYNCRFCSKAFHAVILLEKHLREKHCVFDAAAENGTANGVPPTSTKKAEPADLQGMLLKNPEAPNSHEASEDDVDASEPMYGCDICGAAYTMEVLLQNHRLRDHNIRPGEDDGSRKKAEFIKGSHKCNVCSRTFFSENGLREHLQTHRGPAKHYMCPICGERFPSLLTLTEHKVTHSKSLDTGTCRICKMPLQSEEEFIEHCQMHPDLRNSLTGFRCVVCMQTVTSTLELKIHGTFHMQKLAGSSAASSPNGQGLQKLYKCALCLKEFRSKQDLVRLDVNGLPYGLCAGCMARSANGQVGGLAPPEPADRPCAGLRCPECNVKFESAEDLESHMQVDHRDLTPETSGPRKGAQTSPVPRKKTYQCIKCQMTFENEREIQIHVANHMIEEGINHECKLCNQMFDSPAKLLCHLIEHSFEGMGGTFKCPVCFTVFVQANKLQQHIFAVHGQEDKIYDCSQCPQKFFFQTELQNHTMSQHAQ.

The span at 1–11 shows a compositional bias: basic residues; the sequence is MSRRKQAKPRS. Disordered regions lie at residues 1 to 21, 33 to 70, and 95 to 125; these read MSRRKQAKPRSVKVEEGEASD, AGGLEGEPECDRKTSRALEDRNSVTSQEERNEDDEDVE, and AHRCPGDGDDDPQLSWVASSPSSKDVASPTQ. Positions 41–54 are enriched in basic and acidic residues; it reads ECDRKTSRALEDRN. A phosphoserine mark is found at Ser-55 and Ser-58. The segment at 75 to 101 adopts a C2H2-type 1; degenerate zinc-finger fold; that stretch reads YTCDHCQQDFESLADLTDHRAHRCPGD. The segment covering 110 to 125 has biased composition (polar residues); sequence WVASSPSSKDVASPTQ. C2H2-type zinc fingers lie at residues 146-168, 174-196, 202-224, 230-252, 271-294, 303-326, and 331-353; these read YPCQFCDKSFIRLSYLKRHEQIH, FKCTFCSRLFKHKRSRDRHIKLH, YHCHECEAAFSRSDHLKIHLKTH, FKCSVCKRGFSSTSSLQSHMQAH, FMCDYCEDTFSQTEELEKHVLTLH, LQCIHCPEVFVDESTLLAHIHQAH, and HKCPMCPEQFSSVEGVYCHLDSH. A disordered region spans residues 354–407; that stretch reads RQPDSSNHSVSPDPVLGSVASMSSATPDSSASVERGSTPDSTLKPLRGQKKMRD. Residues 371 to 385 are compositionally biased toward low complexity; that stretch reads SVASMSSATPDSSAS. The C2H2-type 9; degenerate zinc finger occupies 417–441; the sequence is YSCPYCSKRDFTSLAVLEIHLKTIH. 3 consecutive C2H2-type zinc fingers follow at residues 449 to 472, 488 to 511, and 525 to 548; these read HTCQICLDSMPTLYNLNEHVRKLH, FHCNYCPEMFADINSLQEHIRVSH, and FFCNQCSMGFLTESSLTEHIQQAH. Residues 571-596 form a C2H2-type 13; atypical zinc finger; that stretch reads YSCPYCTNSPIFGSILKLTKHIKENH. The interval 598-635 is disordered; sequence NIPLAHSKKSKAEQSPVSSDVEVSSPKRQRLSGSANSI. A Phosphoserine modification is found at Ser-612. Residues 612–623 show a composition bias toward low complexity; sequence SPVSSDVEVSSP. 7 consecutive C2H2-type zinc fingers follow at residues 640 to 662, 670 to 692, 700 to 723, 728 to 751, 758 to 781, 789 to 811, and 815 to 838; these read YPCNQCDLKFSNFESFQTHLKLH, QACPQCKEDFDSQESLLQHLTVH, YVCESCDKQFSSVDDLQKHLLDMH, YHCTLCQEVFDSKVSIQVHLAVKH, YRCTACNWDFRKEADLQVHVKHSH, HKCIFCGETFSTEVELQCHITTH, and YNCRFCSKAFHAVILLEKHLREKH. The C2H2-type 21; degenerate zinc finger occupies 894–916; sequence YGCDICGAAYTMEVLLQNHRLRD. 3 consecutive C2H2-type zinc fingers follow at residues 938–960, 967–989, and 1028–1050; these read HKCNVCSRTFFSENGLREHLQTH, YMCPICGERFPSLLTLTEHKVTH, and FRCVVCMQTVTSTLELKIHGTFH. Ser-1062 carries the phosphoserine modification. The C2H2-type 25; degenerate zinc-finger motif lies at 1072–1090; sequence YKCALCLKEFRSKQDLVRL. C2H2-type zinc fingers lie at residues 1128-1151, 1176-1198, 1206-1228, 1237-1260, and 1267-1290; these read LRCPECNVKFESAEDLESHMQVDH, YQCIKCQMTFENEREIQIHVANH, HECKLCNQMFDSPAKLLCHLIEH, FKCPVCFTVFVQANKLQQHIFAVH, and YDCSQCPQKFFFQTELQNHTMSQH. A compositionally biased stretch (basic and acidic residues) spans 1144 to 1155; the sequence is ESHMQVDHRDLT. Positions 1144–1171 are disordered; it reads ESHMQVDHRDLTPETSGPRKGAQTSPVP.

This sequence belongs to the krueppel C2H2-type zinc-finger protein family. In terms of assembly, homodimer. Interacts with SMAD1 and SMAD4. Interacts with EBF1. Interacts with PARP1. Interacts with CEP290. In terms of tissue distribution, within the cerebellum, Zfp423 is expressed in both ventricular and external germinal zones. Transiently expressed in newly differentiating olfactory-receptor neurons.

The protein resides in the nucleus. In terms of biological role, transcription factor that can both act as an activator or a repressor depending on the context. Plays a central role in BMP signaling and olfactory neurogenesis. Associates with SMADs in response to BMP2 leading to activate transcription of BMP target genes. Acts as a transcriptional repressor via its interaction with EBF1, a transcription factor involved in terminal olfactory receptor neurons differentiation; this interaction preventing EBF1 to bind DNA and activate olfactory-specific genes. Involved in olfactory neurogenesis by participating in a developmental switch that regulates the transition from differentiation to maturation in olfactory receptor neurons. Controls proliferation and differentiation of neural precursors in cerebellar vermis formation. This is Zinc finger protein 423 (Znf423) from Mus musculus (Mouse).